The sequence spans 970 residues: Transposase for insertion sequence element IS1071 in transposon Tn5271 (970 aa).

It belongs to the transposase 7 family.

Its function is as follows. Required for transposition of transposon Tn5271. The sequence is that of Transposase for insertion sequence element IS1071 in transposon Tn5271 from Comamonas testosteroni (Pseudomonas testosteroni).